The sequence spans 471 residues: Type 2 glycosyltransferase (471 aa).

A helical membrane pass occupies residues 4–24 (ILGWFWAFVSAFVLRYLRTIV). N-linked (GlcNAc...) asparagine glycans are attached at residues Asn-29, Asn-88, and Asn-222. The next 3 helical transmembrane spans lie at 305–325 (CLQT…FYSL), 339–359 (MAFT…KLWG), and 368–388 (VIYI…KFWG). The N-linked (GlcNAc...) asparagine glycan is linked to Asn-458.

This sequence belongs to the GT2 glycosyltransferase family.

It localises to the cell membrane. Its function is as follows. Glycosyltransferase involved in the maintenance of the outermost surface of the fungal cell wall. Likely functions in the synthesis of a currently unknown, potentially minor but widespread, extracellular or outer cell wall polysaccharide which plays a key role in facilitating many interactions between plants and fungi by enabling hyphal growth on solid matrices. This Zymoseptoria tritici (strain CBS 115943 / IPO323) (Speckled leaf blotch fungus) protein is Type 2 glycosyltransferase.